We begin with the raw amino-acid sequence, 60 residues long: Large ribosomal subunit protein bL33 (60 aa).

Belongs to the bacterial ribosomal protein bL33 family.

This Chlorobium phaeobacteroides (strain DSM 266 / SMG 266 / 2430) protein is Large ribosomal subunit protein bL33.